We begin with the raw amino-acid sequence, 88 residues long: Putative membrane protein insertion efficiency factor (88 aa).

Positions 64 to 88 are disordered; it reads GVDPVPKKSSSKKTSSTTACGCGHS.

The protein belongs to the UPF0161 family.

The protein resides in the cell inner membrane. Functionally, could be involved in insertion of integral membrane proteins into the membrane. In Herminiimonas arsenicoxydans, this protein is Putative membrane protein insertion efficiency factor.